A 183-amino-acid polypeptide reads, in one-letter code: Protein GrpE (183 aa).

The span at 1 to 14 (MSNEENKINEEALK) shows a compositional bias: basic and acidic residues. Positions 1 to 20 (MSNEENKINEEALKQQDAAE) are disordered.

It belongs to the GrpE family. As to quaternary structure, homodimer.

It is found in the cytoplasm. Its function is as follows. Participates actively in the response to hyperosmotic and heat shock by preventing the aggregation of stress-denatured proteins, in association with DnaK and GrpE. It is the nucleotide exchange factor for DnaK and may function as a thermosensor. Unfolded proteins bind initially to DnaJ; upon interaction with the DnaJ-bound protein, DnaK hydrolyzes its bound ATP, resulting in the formation of a stable complex. GrpE releases ADP from DnaK; ATP binding to DnaK triggers the release of the substrate protein, thus completing the reaction cycle. Several rounds of ATP-dependent interactions between DnaJ, DnaK and GrpE are required for fully efficient folding. This is Protein GrpE from Vibrio vulnificus (strain CMCP6).